The following is a 555-amino-acid chain: Probable portal protein (555 aa).

Belongs to the podoviridae head-to-tail connector protein family. Homododecamer.

Its subcellular location is the virion. In terms of biological role, forms the portal vertex of the capsid. This portal plays critical roles in head assembly, genome packaging, neck/tail attachment, and genome ejection. The portal protein multimerizes as a single ring-shaped homododecamer arranged around a central channel. The polypeptide is Probable portal protein (Bordetella bronchiseptica (Alcaligenes bronchisepticus)).